The primary structure comprises 243 residues: uncharacterized protein (243 aa).

The protein resides in the nucleus. The protein localises to the nucleolus. This is an uncharacterized protein from Schizosaccharomyces pombe (strain 972 / ATCC 24843) (Fission yeast).